The sequence spans 436 residues: UPF0597 protein YhaM (436 aa).

This sequence belongs to the UPF0597 family.

This Shigella flexneri serotype 5b (strain 8401) protein is UPF0597 protein YhaM.